The sequence spans 104 residues: Large ribosomal subunit protein uL24 (104 aa).

This sequence belongs to the universal ribosomal protein uL24 family. As to quaternary structure, part of the 50S ribosomal subunit.

Functionally, one of two assembly initiator proteins, it binds directly to the 5'-end of the 23S rRNA, where it nucleates assembly of the 50S subunit. One of the proteins that surrounds the polypeptide exit tunnel on the outside of the subunit. This chain is Large ribosomal subunit protein uL24, found in Proteus mirabilis (strain HI4320).